Reading from the N-terminus, the 219-residue chain is Putative mediator of RNA polymerase II transcription subunit 10 (219 aa).

Residues 1–39 (MEQQQPQQQNDGQQQQQQQQQHQQQQQQQQQQQQQQQQS) are compositionally biased toward low complexity. Disordered stretches follow at residues 1 to 42 (MEQQ…SEQE) and 177 to 219 (KETQ…INNN). 2 coiled-coil regions span residues 13 to 74 (QQQQ…VVEE) and 166 to 219 (EYAE…INNN). Residues 177–192 (KETQEQQNDDQIKVDD) are compositionally biased toward basic and acidic residues. Low complexity predominate over residues 194 to 219 (NNNNNNNNNNNYNNNNNNNNNNINNN).

The protein belongs to the Mediator complex subunit 10 family. In terms of assembly, component of the Mediator complex.

It is found in the nucleus. Functionally, component of the Mediator complex, a coactivator involved in the regulated transcription of nearly all RNA polymerase II-dependent genes. Mediator functions as a bridge to convey information from gene-specific regulatory proteins to the basal RNA polymerase II transcription machinery. Mediator is recruited to promoters by direct interactions with regulatory proteins and serves as a scaffold for the assembly of a functional preinitiation complex with RNA polymerase II and the general transcription factors. This is Putative mediator of RNA polymerase II transcription subunit 10 (med10) from Dictyostelium discoideum (Social amoeba).